We begin with the raw amino-acid sequence, 355 residues long: UDP-N-acetylglucosamine--N-acetylmuramyl-(pentapeptide) pyrophosphoryl-undecaprenol N-acetylglucosamine transferase (355 aa).

UDP-N-acetyl-alpha-D-glucosamine is bound by residues 15-17 (TGG), N127, R163, S191, I244, 263-268 (ALTVSE), and Q288.

This sequence belongs to the glycosyltransferase 28 family. MurG subfamily.

Its subcellular location is the cell inner membrane. The enzyme catalyses di-trans,octa-cis-undecaprenyl diphospho-N-acetyl-alpha-D-muramoyl-L-alanyl-D-glutamyl-meso-2,6-diaminopimeloyl-D-alanyl-D-alanine + UDP-N-acetyl-alpha-D-glucosamine = di-trans,octa-cis-undecaprenyl diphospho-[N-acetyl-alpha-D-glucosaminyl-(1-&gt;4)]-N-acetyl-alpha-D-muramoyl-L-alanyl-D-glutamyl-meso-2,6-diaminopimeloyl-D-alanyl-D-alanine + UDP + H(+). Its pathway is cell wall biogenesis; peptidoglycan biosynthesis. Functionally, cell wall formation. Catalyzes the transfer of a GlcNAc subunit on undecaprenyl-pyrophosphoryl-MurNAc-pentapeptide (lipid intermediate I) to form undecaprenyl-pyrophosphoryl-MurNAc-(pentapeptide)GlcNAc (lipid intermediate II). The chain is UDP-N-acetylglucosamine--N-acetylmuramyl-(pentapeptide) pyrophosphoryl-undecaprenol N-acetylglucosamine transferase from Escherichia coli O45:K1 (strain S88 / ExPEC).